Here is a 464-residue protein sequence, read N- to C-terminus: 3-isopropylmalate dehydratase large subunit (464 aa).

[4Fe-4S] cluster is bound by residues cysteine 337, cysteine 397, and cysteine 400.

Belongs to the aconitase/IPM isomerase family. LeuC type 1 subfamily. In terms of assembly, heterodimer of LeuC and LeuD. The cofactor is [4Fe-4S] cluster.

It catalyses the reaction (2R,3S)-3-isopropylmalate = (2S)-2-isopropylmalate. It participates in amino-acid biosynthesis; L-leucine biosynthesis; L-leucine from 3-methyl-2-oxobutanoate: step 2/4. Catalyzes the isomerization between 2-isopropylmalate and 3-isopropylmalate, via the formation of 2-isopropylmaleate. This chain is 3-isopropylmalate dehydratase large subunit, found in Bacillus cereus (strain ATCC 14579 / DSM 31 / CCUG 7414 / JCM 2152 / NBRC 15305 / NCIMB 9373 / NCTC 2599 / NRRL B-3711).